Consider the following 901-residue polypeptide: Alanine--tRNA ligase (901 aa).

Positions 581, 585, 684, and 688 each coordinate Zn(2+).

It belongs to the class-II aminoacyl-tRNA synthetase family. Requires Zn(2+) as cofactor.

It is found in the cytoplasm. It carries out the reaction tRNA(Ala) + L-alanine + ATP = L-alanyl-tRNA(Ala) + AMP + diphosphate. Catalyzes the attachment of alanine to tRNA(Ala) in a two-step reaction: alanine is first activated by ATP to form Ala-AMP and then transferred to the acceptor end of tRNA(Ala). Also edits incorrectly charged Ser-tRNA(Ala) and Gly-tRNA(Ala) via its editing domain. This is Alanine--tRNA ligase from Mycobacterium marinum (strain ATCC BAA-535 / M).